The sequence spans 193 residues: NAD(P)H-quinone oxidoreductase subunit I (193 aa).

4Fe-4S ferredoxin-type domains are found at residues 55 to 84 (GRIH…VDWE) and 95 to 124 (KHYS…MTEE). Cys-64, Cys-67, Cys-70, Cys-74, Cys-104, Cys-107, Cys-110, and Cys-114 together coordinate [4Fe-4S] cluster. Residues 169–193 (LDPHDLPSGNQRSGKRPEEIIAESD) form a disordered region.

This sequence belongs to the complex I 23 kDa subunit family. NDH-1 is composed of at least 11 different subunits. [4Fe-4S] cluster is required as a cofactor.

The protein localises to the cellular thylakoid membrane. The enzyme catalyses a plastoquinone + NADH + (n+1) H(+)(in) = a plastoquinol + NAD(+) + n H(+)(out). The catalysed reaction is a plastoquinone + NADPH + (n+1) H(+)(in) = a plastoquinol + NADP(+) + n H(+)(out). In terms of biological role, NDH-1 shuttles electrons from an unknown electron donor, via FMN and iron-sulfur (Fe-S) centers, to quinones in the respiratory and/or the photosynthetic chain. The immediate electron acceptor for the enzyme in this species is believed to be plastoquinone. Couples the redox reaction to proton translocation, and thus conserves the redox energy in a proton gradient. The protein is NAD(P)H-quinone oxidoreductase subunit I of Rippkaea orientalis (strain PCC 8801 / RF-1) (Cyanothece sp. (strain PCC 8801)).